A 599-amino-acid polypeptide reads, in one-letter code: DNA primase (599 aa).

Residues 38-62 (CPFHQEKTPSFTVSDSKRFFYCFGC) form a CHC2-type zinc finger. The Toprim domain occupies 250 to 332 (NYSILVEGYF…EKKISFIRLP (83 aa)). Mg(2+)-binding residues include glutamate 256, aspartate 300, and aspartate 302.

It belongs to the DnaG primase family. Monomer. Interacts with DnaB. It depends on Zn(2+) as a cofactor. Mg(2+) is required as a cofactor.

It catalyses the reaction ssDNA + n NTP = ssDNA/pppN(pN)n-1 hybrid + (n-1) diphosphate.. Functionally, RNA polymerase that catalyzes the synthesis of short RNA molecules used as primers for DNA polymerase during DNA replication. The protein is DNA primase of Rickettsia bellii (strain RML369-C).